A 360-amino-acid polypeptide reads, in one-letter code: A-type ATP synthase subunit C (360 aa).

It belongs to the V-ATPase V0D/AC39 subunit family. As to quaternary structure, has multiple subunits, A(3), B(3), C, D, E, F, G, I and K(x); there may be a few other subunits as well.

It localises to the cell membrane. Its function is as follows. Component of the A-type ATP synthase that produces ATP from ADP in the presence of a proton gradient across the membrane. The sequence is that of A-type ATP synthase subunit C from Methanosarcina mazei (strain ATCC BAA-159 / DSM 3647 / Goe1 / Go1 / JCM 11833 / OCM 88) (Methanosarcina frisia).